We begin with the raw amino-acid sequence, 550 residues long: Membrane protein of ER body 2 (550 aa).

The interval 46–199 (EFRSKAAATA…SSDSEEKSNL (154 aa)) is disordered. Low complexity-rich tracts occupy residues 80 to 105 (SVSE…SETG) and 112 to 121 (TGSNEENGNN). The span at 122-132 (WLESSSTNLPN) shows a compositional bias: polar residues. The stretch at 134 to 165 (ENKRQRNGEDCEIEEEEENNERSLSDSEEKSN) forms a coiled coil. Acidic residues predominate over residues 143-152 (DCEIEEEEEN). Basic and acidic residues-rich tracts occupy residues 153–166 (NERS…KSNL) and 185–198 (KNER…EKSN). Helical transmembrane passes span 374–394 (STMN…IVLA), 425–445 (ILVA…VYAF), 458–478 (ISVF…KVYV), and 500–520 (SIVV…GEYI). Positions 393-418 (LAQNFQDLRNSSDQEKDRYEELLGRR) form a coiled coil.

The protein belongs to the CCC1 family. As to quaternary structure, interacts directly or indirectly with NAI2.

The protein localises to the endoplasmic reticulum membrane. In terms of biological role, may sequester excess cytosolic iron and manganese into endoplasmic reticulum to reduce metal ion toxicity. Not essential for the accumulation of ER body components, including PYK10. The polypeptide is Membrane protein of ER body 2 (MEB2) (Arabidopsis thaliana (Mouse-ear cress)).